The chain runs to 1100 residues: cGMP-inhibited 3',5'-cyclic phosphodiesterase 3B (1100 aa).

Positions 1 to 11 (MRKDERERDAP) are enriched in basic and acidic residues. An interaction with RAPGEF3 region spans residues 1-28 (MRKDERERDAPAMRSPPPPPASAASPPE). Positions 1-29 (MRKDERERDAPAMRSPPPPPASAASPPES) are disordered. A Phosphoserine modification is found at S15. 6 helical membrane-spanning segments follow: residues 69-89 (AGAR…LLGA), 110-130 (LSLS…CFLT), 140-160 (AGSW…FAAW), 170-190 (PAAA…TLAP), 198-218 (VLVL…LGAL), and 225-245 (LLSC…DHFF). The residue at position 273 (S273) is a Phosphoserine; by PKB/AKT1 or PKB/AKT2. Phosphoserine occurs at positions 274 and 421. Disordered stretches follow at residues 400–423 (RKLH…SSGA) and 570–590 (EPDG…SVFS). Residues 408-423 (GRTSFPTPQLRRSSGA) are compositionally biased toward polar residues. Residues 415–439 (PQLRRSSGASSLLTNEHCSRWDRSS) are interaction with PIK3R6. Residues 573–583 (GTDHPSEKSGE) show a composition bias toward basic and acidic residues. Residues 627-1061 (PNIDQEVSLD…KIWKEIIEEE (435 aa)) form the PDEase domain. The active-site Proton donor is H713. H713 is a binding site for AMP. Mg(2+) is bound by residues H717, H797, D798, and D913. Residues D798, D913, and Q964 each contribute to the AMP site. A compositionally biased stretch (acidic residues) spans 993–1024 (EEGDDTESDDDDDDDDGDGGEELDSDDEETED). A disordered region spans residues 993–1033 (EEGDDTESDDDDDDDDGDGGEELDSDDEETEDNLNPKPQRR). Residues 1044-1079 (MHHLTENHKIWKEIIEEEEEKCKAEGNKLQVDNASL) are a coiled coil.

The protein belongs to the cyclic nucleotide phosphodiesterase family. PDE3 subfamily. In terms of assembly, homodimer. Interacts with PIK3CG; regulates PDE3B activity and thereby cAMP levels in cells. Interacts with RAPGEF3 and PIK3R6; form a signaling complex that regulates phosphatidylinositol 3-kinase gamma in angiogenesis. Interacts with ABHD15; this interaction regulates PDE3B's stability and expression and, thereby, impacts the antilipolytic action of insulin. Mg(2+) is required as a cofactor. The cofactor is Mn(2+). Phosphorylation at Ser-273 mediates insulin-induced activation of PDE3B. As to expression, abundant in adipose tissues.

The protein resides in the membrane. The catalysed reaction is a nucleoside 3',5'-cyclic phosphate + H2O = a nucleoside 5'-phosphate + H(+). It catalyses the reaction 3',5'-cyclic AMP + H2O = AMP + H(+). It carries out the reaction 3',5'-cyclic GMP + H2O = GMP + H(+). Its activity is regulated as follows. Inhibited by cGMP. In terms of biological role, cyclic nucleotide phosphodiesterase with a dual-specificity for the second messengers cAMP and cGMP, which are key regulators of many important physiological processes. Regulates angiogenesis by inhibiting the cAMP-dependent guanine nucleotide exchange factor RAPGEF3 and downstream phosphatidylinositol 3-kinase gamma-mediated signaling. Controls cardiac contractility by reducing cAMP concentration in cardiocytes. In Mus musculus (Mouse), this protein is cGMP-inhibited 3',5'-cyclic phosphodiesterase 3B.